A 152-amino-acid polypeptide reads, in one-letter code: Sulfur-rich protein (152 aa).

Residues 1 to 20 (MSTVPVVQGAGSSNSAQDIS) are disordered. 2 consecutive transmembrane segments (helical) span residues 43-63 (VGLV…LVSA) and 69-89 (AIYL…VGIL).

The protein resides in the membrane. The chain is Sulfur-rich protein (srp) from Chlamydia trachomatis serovar A (strain ATCC VR-571B / DSM 19440 / HAR-13).